Reading from the N-terminus, the 614-residue chain is Afadin- and alpha-actinin-binding protein (614 aa).

Coiled coils occupy residues 131–227 and 266–293; these read MDHL…IAMD and RQKQ…SLLS. 3 positions are modified to phosphoserine: S290, S293, and S312. A disordered region spans residues 292 to 317; sequence LSPQKKKPRERVDDSTGTVISDVEED. A coiled-coil region spans residues 374 to 460; the sequence is ISRQDHEQET…RSFTEAAIRL (87 aa). Residues S536, S540, and S542 each carry the phosphoserine modification.

This sequence belongs to the ADIP family. Interacts with afadin and alpha-actinin. Interacts with VAV2. Interacts with SSX2 and SSX3. Does not interact with SSX1 and SSX4. Interacts with PCM1. Interacts with WRAP73. In terms of tissue distribution, widely expressed, with the highest expression in brain, intermediate expression in kidney, testis, spinal cord, liver, heart, lung, skeletal muscle, ovary, fetal liver and fetal brain, and little to no expression in pancreas and spleen. All specific brain regions showed intermediate to high expression, with highest expression in amygdala. Also expressed in fetal tissues, mainly in liver and brain.

It localises to the cell junction. The protein localises to the adherens junction. It is found in the nucleus. The protein resides in the cytoplasm. Its subcellular location is the cytoskeleton. It localises to the microtubule organizing center. The protein localises to the centrosome. It is found in the centriolar satellite. The protein resides in the cilium basal body. Belongs to an adhesion system, which plays a role in the organization of homotypic, interneuronal and heterotypic cell-cell adherens junctions (AJs). May connect the nectin-afadin and E-cadherin-catenin system through alpha-actinin and may be involved in organization of the actin cytoskeleton at AJs through afadin and alpha-actinin. Involved in cell movement: localizes at the leading edge of moving cells in response to PDGF and is required for the formation of the leading edge and the promotion of cell movement, possibly via activation of Rac signaling. Acts as a centrosome maturation factor, probably by maintaining the integrity of the pericentriolar material and proper microtubule nucleation at mitotic spindle poles. The function seems to implicate at least in part WRAP73; the SSX2IP:WRAP73 complex is proposed to act as regulator of spindle anchoring at the mitotic centrosome. Involved in ciliogenesis. It is required for targeted recruitment of the BBSome, CEP290, RAB8, and SSTR3 to the cilia. This chain is Afadin- and alpha-actinin-binding protein (SSX2IP), found in Homo sapiens (Human).